The following is a 317-amino-acid chain: Beta-ketoacyl-[acyl-carrier-protein] synthase III (317 aa).

Residues C112 and H244 contribute to the active site. The ACP-binding stretch occupies residues Q245–R249. The active site involves N274.

It belongs to the thiolase-like superfamily. FabH family. In terms of assembly, homodimer.

The protein resides in the cytoplasm. The enzyme catalyses malonyl-[ACP] + acetyl-CoA + H(+) = 3-oxobutanoyl-[ACP] + CO2 + CoA. It functions in the pathway lipid metabolism; fatty acid biosynthesis. In terms of biological role, catalyzes the condensation reaction of fatty acid synthesis by the addition to an acyl acceptor of two carbons from malonyl-ACP. Catalyzes the first condensation reaction which initiates fatty acid synthesis and may therefore play a role in governing the total rate of fatty acid production. Possesses both acetoacetyl-ACP synthase and acetyl transacylase activities. Its substrate specificity determines the biosynthesis of branched-chain and/or straight-chain of fatty acids. This is Beta-ketoacyl-[acyl-carrier-protein] synthase III from Salmonella paratyphi A (strain ATCC 9150 / SARB42).